The following is a 148-amino-acid chain: Large-conductance mechanosensitive channel (148 aa).

2 helical membrane-spanning segments follow: residues 14-34 and 85-105; these read VVDM…INTL and GIFV…FLSV.

It belongs to the MscL family. As to quaternary structure, homopentamer.

It is found in the cell inner membrane. Its function is as follows. Channel that opens in response to stretch forces in the membrane lipid bilayer. May participate in the regulation of osmotic pressure changes within the cell. This chain is Large-conductance mechanosensitive channel, found in Chlorobium phaeobacteroides (strain DSM 266 / SMG 266 / 2430).